A 394-amino-acid chain; its full sequence is Muscle cell intermediate filament protein AV71 (394 aa).

The coil 1B stretch occupies residues Ala-1–Leu-73. Residues Ala-1–Ala-239 enclose the IF rod domain. Residues Gln-74–Asn-91 are linker 12. A coil 2 region spans residues Glu-92–Ala-239. The tract at residues Gly-240 to Asn-394 is tail. Residues Ser-272–Ser-389 enclose the LTD domain.

The protein belongs to the intermediate filament family.

This is Muscle cell intermediate filament protein AV71 (AV71) from Acanthocheilonema viteae (Filarial nematode worm).